A 586-amino-acid polypeptide reads, in one-letter code: DNA-directed RNA polymerase subunit beta' (586 aa).

Zn(2+)-binding residues include cysteine 64, cysteine 66, cysteine 85, and cysteine 88. Mg(2+) is bound by residues aspartate 448, aspartate 450, and aspartate 452.

The protein belongs to the RNA polymerase beta' chain family. RpoC1 subfamily. In plastids the minimal PEP RNA polymerase catalytic core is composed of four subunits: alpha, beta, beta', and beta''. When a (nuclear-encoded) sigma factor is associated with the core the holoenzyme is formed, which can initiate transcription. It depends on Mg(2+) as a cofactor. Requires Zn(2+) as cofactor.

Its subcellular location is the plastid. It localises to the chloroplast. The catalysed reaction is RNA(n) + a ribonucleoside 5'-triphosphate = RNA(n+1) + diphosphate. In terms of biological role, DNA-dependent RNA polymerase catalyzes the transcription of DNA into RNA using the four ribonucleoside triphosphates as substrates. This is DNA-directed RNA polymerase subunit beta' from Euglena gracilis.